We begin with the raw amino-acid sequence, 420 residues long: Vacuolar amino acid transporter 5 (420 aa).

Residues 1–19 (MSGYSPLSSGPADVHIGKA) are Cytoplasmic-facing. The helical transmembrane segment at 20-40 (GFFSSVINLANTILGAGILSL) threads the bilayer. The Vacuolar portion of the chain corresponds to 41-49 (PNAFTKTGL). The chain crosses the membrane as a helical span at residues 50–70 (LFGCLTIVFSAFASFLGLYFV). Over 71 to 96 (SQCAARLPRGKASFAAVAKHTFPSLA) the chain is Cytoplasmic. A helical transmembrane segment spans residues 97–117 (VVFDASIAVKCFGVAVSYLVI). Residues 118-141 (VGDLMPQIAPSLGLSSPMFLRRQT) lie on the Vacuolar side of the membrane. The chain crosses the membrane as a helical span at residues 142–162 (WIVFALFVLTPLSFLKRLDSL). Topologically, residues 163–166 (RHTS) are cytoplasmic. Residues 167 to 187 (VISLIALCYLVFIVLYHFIIG) form a helical membrane-spanning segment. Residues 188–195 (DTVKGEIR) lie on the Vacuolar side of the membrane. A helical membrane pass occupies residues 196–216 (YFVPESGFGYLSVLPVFVFGF). Topologically, residues 217–240 (TCHQNAFSVINEVRNFSQGFVNFT) are cytoplasmic. Residues 241–261 (MFTAIISSTLLYLLVAITGYL) form a helical membrane-spanning segment. Over 262-278 (SFGSLASGNIIAMYDNT) the chain is Vacuolar. Residues 279–299 (SIWIIGGKLAIVVLVLFSYPL) form a helical membrane-spanning segment. Residues 300–326 (QCHPCRNSVYQAIRRSYSAHDMSDGYH) lie on the Cytoplasmic side of the membrane. The chain crosses the membrane as a helical span at residues 327 to 347 (AVITLCILLFTHSLALLLSSL). Over 348 to 349 (EM) the chain is Vacuolar. Residues 350 to 370 (VLAFVGSTGSTFISFILPGSL) form a helical membrane-spanning segment. Residues 371–394 (YYFFSHKVASPGNSSPLQLRISRA) lie on the Cytoplasmic side of the membrane. Residues 395-415 (FAAGLAIYGTVVMILCLNINI) traverse the membrane as a helical segment. The Vacuolar portion of the chain corresponds to 416–420 (AKLSH).

Belongs to the amino acid/polyamine transporter 2 family.

Its subcellular location is the vacuole membrane. Its function is as follows. Vacuolar amino acid transporter involved in the vacuolar uptake of histidine, glutamate, tyrosine, arginine, lysine, and serine. Required for sporulation. The polypeptide is Vacuolar amino acid transporter 5 (avt5) (Schizosaccharomyces pombe (strain 972 / ATCC 24843) (Fission yeast)).